The following is a 450-amino-acid chain: UDP-N-acetylmuramoylalanine--D-glutamate ligase (450 aa).

118–124 serves as a coordination point for ATP; the sequence is GSNAKST.

This sequence belongs to the MurCDEF family.

The protein resides in the cytoplasm. It catalyses the reaction UDP-N-acetyl-alpha-D-muramoyl-L-alanine + D-glutamate + ATP = UDP-N-acetyl-alpha-D-muramoyl-L-alanyl-D-glutamate + ADP + phosphate + H(+). Its pathway is cell wall biogenesis; peptidoglycan biosynthesis. Functionally, cell wall formation. Catalyzes the addition of glutamate to the nucleotide precursor UDP-N-acetylmuramoyl-L-alanine (UMA). This is UDP-N-acetylmuramoylalanine--D-glutamate ligase from Pseudomonas putida (strain ATCC 47054 / DSM 6125 / CFBP 8728 / NCIMB 11950 / KT2440).